We begin with the raw amino-acid sequence, 215 residues long: Sec-independent protein translocase protein TatB (215 aa).

Residues methionine 1–glycine 21 form a helical membrane-spanning segment. 2 disordered regions span residues aspartate 95–asparagine 119 and alanine 138–alanine 215. The segment covering glutamine 145–glutamate 157 has biased composition (basic and acidic residues). A compositionally biased stretch (basic residues) spans serine 203–alanine 215.

This sequence belongs to the TatB family. The Tat system comprises two distinct complexes: a TatABC complex, containing multiple copies of TatA, TatB and TatC subunits, and a separate TatA complex, containing only TatA subunits. Substrates initially bind to the TatABC complex, which probably triggers association of the separate TatA complex to form the active translocon.

The protein localises to the cell inner membrane. Part of the twin-arginine translocation (Tat) system that transports large folded proteins containing a characteristic twin-arginine motif in their signal peptide across membranes. Together with TatC, TatB is part of a receptor directly interacting with Tat signal peptides. TatB may form an oligomeric binding site that transiently accommodates folded Tat precursor proteins before their translocation. The polypeptide is Sec-independent protein translocase protein TatB (Rhizobium meliloti (strain 1021) (Ensifer meliloti)).